The primary structure comprises 273 residues: NCYIFNWGQEGQELLESANPGADFGLKMVLDIDQKEYIPFLQSTAAARIILHQQRSFPFLKDLGIYAMPGTETSIAVLEDQTQHLEAPYSSCTVDGSDIPVANIYSKFNSSYSIQSCLRSCFQEIMVKYCKCAYYLFPLLNGAHYCNNQEDPDWVPCYYNIWDTVSHREQCINMCQQPCNDSNYKMTISMADWPSAAAEDWIFHVLSYEKDTSLDITVNRDGIMRLNIYFEEFNYRSISESPTTNVVWLLSNLGGQFGFWMGGSVLCIIEFGE.

Over 1-245 (NCYIFNWGQE…RSISESPTTN (245 aa)) the chain is Extracellular. 5 cysteine pairs are disulfide-bonded: cysteine 92-cysteine 179, cysteine 117-cysteine 175, cysteine 121-cysteine 171, cysteine 130-cysteine 157, and cysteine 132-cysteine 146. Residues 246-273 (VVWLLSNLGGQFGFWMGGSVLCIIEFGE) form a helical membrane-spanning segment.

The protein belongs to the amiloride-sensitive sodium channel (TC 1.A.6) family. SCNN1B subfamily. As to quaternary structure, component of the heterotrimeric epithelial sodium channel (ENaC) composed of an alpha/SCNN1A, a beta/SCNN1B and a gamma/SCNN1G subunit.

The protein localises to the apical cell membrane. Its subcellular location is the cytoplasmic vesicle membrane. It carries out the reaction Na(+)(in) = Na(+)(out). With respect to regulation, originally identified and characterized by its inhibition by the diuretic drug amiloride. This is one of the three pore-forming subunits of the heterotrimeric epithelial sodium channel (ENaC), a critical regulator of sodium balance and fluid homeostasis. ENaC operates in epithelial tissues, where it mediates the electrodiffusion of sodium ions from extracellular fluid through the apical membrane of cells, with water following osmotically. It plays a key role in maintaining sodium homeostasis through electrogenic sodium reabsorption in the kidneys. Additionally, ENaC is essential for airway surface liquid homeostasis, which is crucial for proper mucus clearance. The protein is Epithelial sodium channel subunit beta of Aquarana catesbeiana (American bullfrog).